The following is a 228-amino-acid chain: UPF0173 metal-dependent hydrolase BLi03080/BL00413 (228 aa).

This sequence belongs to the UPF0173 family.

The protein is UPF0173 metal-dependent hydrolase BLi03080/BL00413 of Bacillus licheniformis (strain ATCC 14580 / DSM 13 / JCM 2505 / CCUG 7422 / NBRC 12200 / NCIMB 9375 / NCTC 10341 / NRRL NRS-1264 / Gibson 46).